Here is a 421-residue protein sequence, read N- to C-terminus: Voltage-dependent calcium channel gamma-8 subunit (421 aa).

A run of 4 helical transmembrane segments spans residues 19–39 (VQVL…TIAI), 127–147 (SSIF…CVAA), 157–177 (IILG…IGVI), and 207–227 (FGGL…NIYI). Ser-251 and Ser-254 each carry phosphoserine. Positions 271–304 (RRSRSSSRGSSEASPSRDASPGGPGGPGFASTDI) are disordered. Over residues 276-287 (SSRGSSEASPSR) the composition is skewed to low complexity. The helical transmembrane segment at 318–338 (VAAGLASAGGGGGGAGVGAYG) threads the bilayer. Disordered regions lie at residues 342 to 363 (GAAG…GFLT) and 378 to 421 (VTVT…TTPV). Positions 384 to 397 (PAAPAPAPPAPAAP) are enriched in pro residues. The segment covering 408–421 (ASNTNTLNRKTTPV) has biased composition (polar residues).

Belongs to the PMP-22/EMP/MP20 family. CACNG subfamily. As to quaternary structure, interacts with CACNA1C. Identified in a complex with the L-type calcium channel subunits CACNA1C, CACNA2D1 and either CACNB1 or CACNB2. Acts as an auxiliary subunit for AMPA-selective glutamate receptors (AMPARs). Found in a complex with GRIA1, GRIA2, GRIA3, GRIA4, CNIH2, CNIH3, CACNG2, CACNG3, CACNG4, CACNG5 and CACNG7. Interacts with CNIH2. Found in a complex with GRIA1, GRIA2, GRIA3, GRIA4, DLG4 and CNIH2. Palmitoylated. Probably palmitoylated by ZDHHC3 and ZDHHC7.

It is found in the cell membrane. Its subcellular location is the postsynaptic density membrane. In terms of biological role, regulates the activity of L-type calcium channels that contain CACNA1C as pore-forming subunit. Regulates the trafficking and gating properties of AMPA-selective glutamate receptors (AMPARs). Promotes their targeting to the cell membrane and synapses and modulates their gating properties by slowing their rates of activation, deactivation and desensitization and by mediating their resensitization. Does not show subunit-specific AMPA receptor regulation and regulates all AMPAR subunits. Thought to stabilize the calcium channel in an inactivated (closed) state. In Rattus norvegicus (Rat), this protein is Voltage-dependent calcium channel gamma-8 subunit.